Reading from the N-terminus, the 323-residue chain is L-lactate dehydrogenase (323 aa).

NAD(+) contacts are provided by residues valine 16, asparagine 37, and 81–82; that span reads GA. Substrate contacts are provided by residues glutamine 84, arginine 90, and 122-125; that span reads NPVD. Residues 120 to 122 and serine 145 each bind NAD(+); that span reads ATN. 150–153 provides a ligand contact to substrate; the sequence is DSAR. Histidine 177 (proton acceptor) is an active-site residue. Residue tyrosine 221 is modified to Phosphotyrosine. Substrate is bound at residue threonine 230.

The protein belongs to the LDH/MDH superfamily. LDH family. As to quaternary structure, homotetramer.

The protein localises to the cytoplasm. It catalyses the reaction (S)-lactate + NAD(+) = pyruvate + NADH + H(+). It functions in the pathway fermentation; pyruvate fermentation to lactate; (S)-lactate from pyruvate: step 1/1. In terms of biological role, catalyzes the conversion of lactate to pyruvate. This is L-lactate dehydrogenase from Limosilactobacillus reuteri (Lactobacillus reuteri).